A 76-amino-acid polypeptide reads, in one-letter code: Protein sprouty homolog 1 (76 aa).

Residues 1 to 52 (NPCSCSQSHCCSRYLCMGAMSLFLPCLLCYPPAKGCLKLCRGCYDRVNRPGC) form the SPR domain.

This sequence belongs to the sprouty family. In terms of tissue distribution, brain and interlimb region.

Its subcellular location is the cytoplasm. It is found in the membrane. Its function is as follows. Inhibits fibroblast growth factor (FGF)-induced retinal lens fiber differentiation. Inhibits TGFB-induced epithelial-to-mesenchymal transition in lens epithelial cells. This is Protein sprouty homolog 1 (SPRY1) from Gallus gallus (Chicken).